A 374-amino-acid chain; its full sequence is S-adenosylmethionine:tRNA ribosyltransferase-isomerase (374 aa).

The protein belongs to the QueA family. Monomer.

Its subcellular location is the cytoplasm. The enzyme catalyses 7-aminomethyl-7-carbaguanosine(34) in tRNA + S-adenosyl-L-methionine = epoxyqueuosine(34) in tRNA + adenine + L-methionine + 2 H(+). It functions in the pathway tRNA modification; tRNA-queuosine biosynthesis. In terms of biological role, transfers and isomerizes the ribose moiety from AdoMet to the 7-aminomethyl group of 7-deazaguanine (preQ1-tRNA) to give epoxyqueuosine (oQ-tRNA). The chain is S-adenosylmethionine:tRNA ribosyltransferase-isomerase from Prochlorococcus marinus (strain AS9601).